The primary structure comprises 395 residues: Protein phosphatase methylesterase 1 (395 aa).

Residues serine 194, aspartate 222, and histidine 348 contribute to the active site.

Belongs to the AB hydrolase superfamily.

It carries out the reaction [phosphatase 2A protein]-C-terminal L-leucine methyl ester + H2O = [phosphatase 2A protein]-C-terminal L-leucine + methanol + H(+). Its function is as follows. Demethylates proteins that have been reversibly carboxymethylated. Demethylates the phosphatase PP2A catalytic subunit. The chain is Protein phosphatase methylesterase 1 (PPE1) from Kluyveromyces lactis (strain ATCC 8585 / CBS 2359 / DSM 70799 / NBRC 1267 / NRRL Y-1140 / WM37) (Yeast).